An 88-amino-acid polypeptide reads, in one-letter code: Monensin polyketide synthase acyl carrier protein (88 aa).

One can recognise a Carrier domain in the interval 5-82 (PFTLADLQRI…ELIDHVNERL (78 aa)). Ser42 carries the O-(pantetheine 4'-phosphoryl)serine modification.

In terms of processing, 4'-phosphopantetheine is transferred from CoA to a specific serine of the apo-ACP-like protein.

Its pathway is antifungal biosynthesis; monensin biosynthesis. Functionally, acyl carrier protein. The protein is Monensin polyketide synthase acyl carrier protein of Streptomyces virginiae (Streptomyces cinnamonensis).